The sequence spans 567 residues: Oxygen-dependent choline dehydrogenase (567 aa).

FAD is bound at residue 6 to 35 (DYIIVGAGSAGNTLATRLTEDEGVTVLLLE). The segment at 182-203 (QQEGFGPMDRTVTPKGRRASTA) is disordered. The active-site Proton acceptor is the H475.

This sequence belongs to the GMC oxidoreductase family. Requires FAD as cofactor.

The enzyme catalyses choline + A = betaine aldehyde + AH2. It catalyses the reaction betaine aldehyde + NAD(+) + H2O = glycine betaine + NADH + 2 H(+). It functions in the pathway amine and polyamine biosynthesis; betaine biosynthesis via choline pathway; betaine aldehyde from choline (cytochrome c reductase route): step 1/1. In terms of biological role, involved in the biosynthesis of the osmoprotectant glycine betaine. Catalyzes the oxidation of choline to betaine aldehyde and betaine aldehyde to glycine betaine at the same rate. In Pseudomonas fluorescens (strain ATCC BAA-477 / NRRL B-23932 / Pf-5), this protein is Oxygen-dependent choline dehydrogenase.